The chain runs to 630 residues: Protein phosphatase 2C-like domain-containing protein 1 (630 aa).

The region spanning 170 to 621 (GVGICEDRNS…DNITVMVIFL (452 aa)) is the PPM-type phosphatase domain. Over residues 557–569 (TTHRKPCSEKVTD) the composition is skewed to basic and acidic residues. Positions 557-578 (TTHRKPCSEKVTDRPTSVNDVA) are disordered.

The protein belongs to the PP2C family.

In Homo sapiens (Human), this protein is Protein phosphatase 2C-like domain-containing protein 1 (PP2D1).